Consider the following 165-residue polypeptide: Ribonuclease H2 subunit C (165 aa).

M1 carries the N-acetylmethionine modification.

It belongs to the RNase H2 subunit C family. In terms of assembly, the RNase H2 complex is a heterotrimer composed of the catalytic subunit RNASEH2A and the non-catalytic subunits RNASEH2B and RNASEH2C.

It localises to the nucleus. Functionally, non catalytic subunit of RNase H2, an endonuclease that specifically degrades the RNA of RNA:DNA hybrids. Participates in DNA replication, possibly by mediating the removal of lagging-strand Okazaki fragment RNA primers during DNA replication. Mediates the excision of single ribonucleotides from DNA:RNA duplexes. The chain is Ribonuclease H2 subunit C (RNASEH2C) from Bos taurus (Bovine).